The sequence spans 367 residues: Terpene cyclase verU1 (367 aa).

Residues 8–28 form a helical membrane-spanning segment; that stretch reads IRCSLLLLGLVGIYTVWISSF. An N-linked (GlcNAc...) asparagine glycan is attached at Asn50. The next 8 helical transmembrane spans lie at 57-77, 85-105, 120-140, 169-189, 197-217, 239-259, 292-312, and 327-347; these read FTGI…YWPV, LSLI…LFAL, MAMF…PIYC, CLLG…PAVV, IIAL…LTHL, ISAM…SLLA, FQWD…GLHI, and LIPE…AALY. Asn352 carries N-linked (GlcNAc...) asparagine glycosylation.

Belongs to the membrane-bound ascI terpene cyclase family.

It is found in the membrane. Its pathway is secondary metabolite biosynthesis; terpenoid biosynthesis. It functions in the pathway mycotoxin biosynthesis. In terms of biological role, terpene cyclase; part of the gene cluster that mediates the biosynthesis of the neurotoxin verrucosidin, a methylated alpha-pyrone polyketide that inhibits oxidative phosphorylation in mitochondria and thereby causes neurological diseases. The carbon backbone of verrucosidin is synthesized by the HR-PKS verA, and further modified by the other verrucodidin cluster enzymes. The protein is Terpene cyclase verU1 of Penicillium polonicum.